The following is a 246-amino-acid chain: Mast cell protease 1 (246 aa).

Positions 1–18 are cleaved as a signal peptide; it reads MQALLFLMALLLPSGAGA. The propeptide at 19–20 is activation peptide; the sequence is EE. The Peptidase S1 domain maps to 21 to 244; that stretch reads IIGGVEARPH…YVPWIKTVIN (224 aa). Cysteines 50 and 66 form a disulfide. His65 functions as the Charge relay system in the catalytic mechanism. A glycan (N-linked (GlcNAc...) asparagine) is linked at Asn102. The active-site Charge relay system is Asp109. Cystine bridges form between Cys143/Cys208 and Cys174/Cys187. Catalysis depends on Ser202, which acts as the Charge relay system.

This sequence belongs to the peptidase S1 family. Granzyme subfamily. As to expression, mucosal mast cells.

The protein localises to the secreted. It is found in the cytoplasmic granule. In terms of biological role, has a chymotrypsin-like activity. This Mus musculus (Mouse) protein is Mast cell protease 1 (Mcpt1).